Reading from the N-terminus, the 92-residue chain is Small ribosomal subunit protein uS19 (92 aa).

The protein belongs to the universal ribosomal protein uS19 family.

Protein S19 forms a complex with S13 that binds strongly to the 16S ribosomal RNA. The protein is Small ribosomal subunit protein uS19 of Desulfatibacillum aliphaticivorans.